The following is a 208-amino-acid chain: Outer-membrane lipoprotein LolB (208 aa).

The N-terminal stretch at 1-17 (MIRRLLGVALLTGAITG) is a signal peptide. A lipid anchor (N-palmitoyl cysteine) is attached at Cys18. Cys18 is lipidated: S-diacylglycerol cysteine.

This sequence belongs to the LolB family. In terms of assembly, monomer.

Its subcellular location is the cell outer membrane. In terms of biological role, plays a critical role in the incorporation of lipoproteins in the outer membrane after they are released by the LolA protein. This chain is Outer-membrane lipoprotein LolB, found in Marinobacter nauticus (strain ATCC 700491 / DSM 11845 / VT8) (Marinobacter aquaeolei).